Here is a 724-residue protein sequence, read N- to C-terminus: Probable dipeptidyl-peptidase 5 (724 aa).

The signal sequence occupies residues 1–19 (MGALTWLSVVAAAASTALA). 6 N-linked (GlcNAc...) asparagine glycosylation sites follow: Asn76, Asn97, Asn154, Asn257, Asn383, and Asn453. Catalysis depends on Ser563, which acts as the Charge relay system. N-linked (GlcNAc...) asparagine glycosylation is present at Asn610. Active-site charge relay system residues include Asp646 and His678.

It belongs to the peptidase S9C family.

The protein resides in the secreted. Its function is as follows. Extracellular dipeptidyl-peptidase which removes N-terminal dipeptides sequentially from polypeptides having unsubstituted N-termini. The polypeptide is Probable dipeptidyl-peptidase 5 (dpp5) (Aspergillus clavatus (strain ATCC 1007 / CBS 513.65 / DSM 816 / NCTC 3887 / NRRL 1 / QM 1276 / 107)).